The sequence spans 411 residues: MAPSISRGLLLLAALCCLAPSFLAEDAQETDTSQQDQSPTYRKISSNLADFAFSLYRELVHQSNTSNIFFSPMSITTAFAMLSLGSKGDTRKQILEGLEFNLTQIPEADIHKAFHHLLQTLNRPDSELQLNTGNGLFVNKNLKLVEKFLEEVKNNYHSEAFSVNFADSEEAKKVINDYVEKGTQGKIVDLMKQLDEDTVFALVNYIFFKGKWKRPFNPEHTRDADFHVDKSTTVKVPMMNRLGMFDMHYCSTLSSWVLMMDYLGNATAIFLLPDDGKMQHLEQTLTKDLISRFLLNRQTRSAILYFPKLSISGTYNLKTLLSSLGITRVFNNDADLSGITEDAPLKLSQAVHKAVLTLDERGTEAAGATVVEAVPMSLPPQVKFDHPFIFMIVESETQSPLFVGKVIDPTR.

A signal peptide spans 1–24 (MAPSISRGLLLLAALCCLAPSFLA). S33 carries the post-translational modification Phosphoserine. Residues N64, N101, and N265 are each glycosylated (N-linked (GlcNAc...) asparagine). An RCL region spans residues 367–386 (GATVVEAVPMSLPPQVKFDH). Residue S377 is modified to Phosphoserine.

The protein belongs to the serpin family. Interacts with CELA2A. Interacts with ERGIC3 and LMAN1/ERGIC53. Interacts with PRSS1/Trypsin. Plasma.

Its subcellular location is the secreted. In terms of biological role, inhibitor of serine proteases. The primary target is elastase, but also has a moderate affinity for plasmin and thrombin. The polypeptide is Alpha-1-antiproteinase (Serpina1) (Rattus norvegicus (Rat)).